A 72-amino-acid chain; its full sequence is Protein kish-A (72 aa).

The signal sequence occupies residues 1–26 (MSAIFNFQSLLTVILLLICTCAYIRS). At 27-53 (LAPSLLDKNKSGLLGIFWKCARIGERK) the chain is on the extracellular side. Asn-35 carries N-linked (GlcNAc...) asparagine glycosylation. A helical membrane pass occupies residues 54–71 (SPYVAVCCVVMAFSILFM). A topological domain (cytoplasmic) is located at residue Gln-72.

Belongs to the KISH family.

The protein localises to the golgi apparatus membrane. In terms of biological role, involved in the early part of the secretory pathway. In Taeniopygia guttata (Zebra finch), this protein is Protein kish-A (TMEM167A).